We begin with the raw amino-acid sequence, 274 residues long: Large ribosomal subunit protein uL2cz/uL2cy (274 aa).

Residues 224-274 form a disordered region; sequence NPVDHPHGGGEGRAPIGRKKPATPWGYPALGRRSRKRNKYSDNLILRRRSK.

It belongs to the universal ribosomal protein uL2 family. As to quaternary structure, part of the 50S ribosomal subunit.

Its subcellular location is the plastid. It localises to the chloroplast. This chain is Large ribosomal subunit protein uL2cz/uL2cy (rpl2-A), found in Morus indica (Mulberry).